Consider the following 23-residue polypeptide: Septenin 2b (23 aa).

As to expression, expressed in skin glands.

It localises to the secreted. In terms of biological role, may act as an antimicrobial peptide. The protein is Septenin 2b of Osteopilus septentrionalis (Cuban treefrog).